The primary structure comprises 576 residues: MAGUK p55 subfamily member 7 (576 aa).

2 consecutive L27 domains span residues 10 to 65 (SDTG…KQSP) and 67 to 122 (PILH…YDPV). In terms of domain architecture, PDZ spans 139 to 220 (IIRLVKNREP…AITFKIIPGS (82 aa)). The region spanning 228 to 298 (EGKMFIKALF…PSKHFQERRL (71 aa)) is the SH3 domain. Residues 289–383 (PSKHFQERRL…VGPVGVGLNE (95 aa)) are phospho-regulated basic and hydrophobic (PRBH) motif. The Guanylate kinase-like domain occupies 368 to 560 (YRLVVLVGPV…AFNELKTTFD (193 aa)). Ser-409 carries the phosphoserine modification.

It belongs to the MAGUK family. Heterodimer; able to heterodimerize via its C-terminal L27 domain with LIN7A, LIN7B and LIN7C. Forms a tripartite complex composed of DLG1, MPP7 and LIN7 (LIN7A or LIN7C). Interacts with DLG1 via its N-terminal L27 domain. Interacts with PALS1 and PATJ. In terms of processing, phosphorylated by aPKC which promotes dissociation from the cell cortex.

It is found in the membrane. The protein localises to the lateral cell membrane. It localises to the cell junction. Its subcellular location is the tight junction. The protein resides in the adherens junction. It is found in the cytoplasm. The protein localises to the cell cortex. In terms of biological role, acts as an important adapter that promotes epithelial cell polarity and tight junction formation via its interaction with DLG1. Involved in the assembly of protein complexes at sites of cell-cell contact. The sequence is that of MAGUK p55 subfamily member 7 (MPP7) from Homo sapiens (Human).